The chain runs to 74 residues: uncharacterized protein (74 aa).

This is an uncharacterized protein from Vaccinia virus (strain Copenhagen) (VACV).